A 2324-amino-acid chain; its full sequence is Myomegalin (2324 aa).

4 coiled-coil regions span residues 41–132 (REDV…LVEA), 158–205 (QVKL…LLEE), 238–288 (DSHL…SLKE), and 348–638 (LFCS…NKQA). 2 disordered regions span residues 72–96 (TWAD…EPQQ) and 205–240 (EPGG…SDSH). The segment covering 85–96 (AELRRQVEEPQQ) has biased composition (basic and acidic residues). Residues 219–238 (PTQQKPDLNETPTTQPSVSD) show a composition bias toward polar residues. Positions 701–747 (PAGATSVGPHHGEQTDQGSTQMPSRDDSTSLTAREEASIPRSTLGDS) are disordered. At threonine 705 the chain carries Phosphothreonine. Positions 724–738 (SRDDSTSLTAREEAS) are enriched in basic and acidic residues. Coiled-coil stretches lie at residues 745-822 (GDSD…QLVD), 855-923 (ENRR…EEVL), and 1011-1043 (LRAE…GFSS). Disordered stretches follow at residues 1155 to 1182 (LPSS…SLKL) and 1195 to 1216 (NKSQ…STKH). Coiled coils occupy residues 1213-1241 (STKH…SEAT), 1346-1384 (TSDD…LSAT), and 1430-1455 (GLQA…PKTG). Disordered regions lie at residues 1540 to 1559 (TDRL…KEEA), 1589 to 1610 (RFSS…SSTS), 1628 to 1685 (YTHY…IPKP), 1742 to 1773 (APPT…SPAR), 1857 to 1877 (LSST…GLES), and 2081 to 2140 (NQQP…TPPK). In terms of domain architecture, Olduvai spans 1550-1641 (KDHKSEKEEA…EEKKPSPSNS (92 aa)). Composition is skewed to low complexity over residues 1591–1610 (SSPP…SSTS) and 1637–1646 (SPSNSAASAS). Positions 1743–1767 (PPTSTSTLLSNHTEASSPRYSNPAQ) are enriched in polar residues. A coiled-coil region spans residues 1821 to 2056 (GADLLEEHLG…LRLQLEQQMD (236 aa)). Composition is skewed to polar residues over residues 2081 to 2090 (NQQPPFQGSA) and 2108 to 2135 (PSNS…SAAT). The stretch at 2248–2274 (EEGNLMEKELLDLRAQVSQQQQLLQST) forms a coiled coil.

In terms of assembly, interacts with PDE4D. May interact with MAPRE1 and MAPRE3. May form a pericentrosomal complex with AKAP9, CDK5RAP2 and EB1/MAPRE1 in an isoform-specific manner; within this complex, may mediate MAPRE1-binding to CDK5RAP2. Interaction with AKAP9 stabilizes both proteins. May interact with CAMSAP2 in an isoform-specific manner; this interaction is much stronger in the presence of AKAP9. In complex with AKAP9, recruits CAMSAP2 to the Golgi apparatus. May interact with unglycosylated LGALS3BP in an isoform-specific manner; this interaction may connect the pericentrosomal complex to the gamma-tubulin ring complex (gamma-TuRC) to promote microtubule assembly and acetylation. Abundantly expressed in heart and skeletal muscle and to a lower extent in brain, lung and liver. Expressed in heart, skeletal muscle and testis (at protein level).

It localises to the cytoplasm. Its subcellular location is the cytoskeleton. The protein resides in the microtubule organizing center. It is found in the centrosome. The protein localises to the golgi apparatus. Its function is as follows. Functions as an anchor sequestering components of the cAMP-dependent pathway to Golgi and/or centrosomes. May participate in microtubule dynamics, promoting microtubule assembly, in an isoform-specific manner. Depending upon the cell context, may act at the level of the Golgi apparatus or that of the centrosome. In complex with AKAP9, recruits CAMSAP2 to the Golgi apparatus and tethers non-centrosomal minus-end microtubules to the Golgi, an important step for polarized cell movement. In complex with AKAP9, EB1/MAPRE1 and CDK5RAP2, contributes to microtubules nucleation and extension from the centrosome to the cell periphery, a crucial process for directed cell migration, mitotic spindle orientation and cell-cycle progression. This is Myomegalin (Pde4dip) from Rattus norvegicus (Rat).